The following is a 437-amino-acid chain: UDP-N-acetylmuramoylalanine--D-glutamate ligase (437 aa).

115-121 (GSNGKST) contributes to the ATP binding site.

This sequence belongs to the MurCDEF family.

The protein resides in the cytoplasm. The catalysed reaction is UDP-N-acetyl-alpha-D-muramoyl-L-alanine + D-glutamate + ATP = UDP-N-acetyl-alpha-D-muramoyl-L-alanyl-D-glutamate + ADP + phosphate + H(+). The protein operates within cell wall biogenesis; peptidoglycan biosynthesis. Cell wall formation. Catalyzes the addition of glutamate to the nucleotide precursor UDP-N-acetylmuramoyl-L-alanine (UMA). This Vibrio campbellii (strain ATCC BAA-1116) protein is UDP-N-acetylmuramoylalanine--D-glutamate ligase.